A 254-amino-acid chain; its full sequence is Keratin-associated protein 24-1 (254 aa).

6 repeat units span residues Tyr193–Ser202, Tyr203–Ser212, Tyr213–Ser222, Tyr223–Ser232, Tyr233–Arg242, and Tyr243–Lys252. The interval Tyr193–Lys252 is 6 X 10 AA repeats of Y-[ILR]-[SVPC]-[NRTS]-[SNTG]-X-[QHRP]-[PSY]-[QSL]-[SRK].

It belongs to the PMG family. Interacts with hair keratins. As to expression, specific expression in the middle/upper hair cuticle.

Functionally, in the hair cortex, hair keratin intermediate filaments are embedded in an interfilamentous matrix, consisting of hair keratin-associated proteins (KRTAP), which are essential for the formation of a rigid and resistant hair shaft through their extensive disulfide bond cross-linking with abundant cysteine residues of hair keratins. The matrix proteins include the high-sulfur and high-glycine-tyrosine keratins. This is Keratin-associated protein 24-1 (KRTAP24-1) from Homo sapiens (Human).